The chain runs to 79 residues: Defensin-like protein 117 (79 aa).

A signal peptide spans 1–24 (MTTTKTMLVAFVLTLFFVISSVHC). 4 disulfides stabilise this stretch: C40–C75, C46–C68, C53–C73, and C57–C74.

This sequence belongs to the DEFL family.

It is found in the secreted. The polypeptide is Defensin-like protein 117 (Arabidopsis thaliana (Mouse-ear cress)).